A 242-amino-acid chain; its full sequence is Protein GrpE (242 aa).

Disordered stretches follow at residues Met1–Leu75 and Val93–Lys136. Low complexity predominate over residues Asp23 to Asp37. The span at Ala38–Ala49 shows a compositional bias: acidic residues. The span at Gly50–Val64 shows a compositional bias: polar residues. The span at Leu96 to Ser108 shows a compositional bias: acidic residues. Over residues Tyr124–Gln133 the composition is skewed to basic residues.

This sequence belongs to the GrpE family. Homodimer.

It is found in the cytoplasm. Functionally, participates actively in the response to hyperosmotic and heat shock by preventing the aggregation of stress-denatured proteins, in association with DnaK and GrpE. It is the nucleotide exchange factor for DnaK and may function as a thermosensor. Unfolded proteins bind initially to DnaJ; upon interaction with the DnaJ-bound protein, DnaK hydrolyzes its bound ATP, resulting in the formation of a stable complex. GrpE releases ADP from DnaK; ATP binding to DnaK triggers the release of the substrate protein, thus completing the reaction cycle. Several rounds of ATP-dependent interactions between DnaJ, DnaK and GrpE are required for fully efficient folding. This Haloferax mediterranei (strain ATCC 33500 / DSM 1411 / JCM 8866 / NBRC 14739 / NCIMB 2177 / R-4) (Halobacterium mediterranei) protein is Protein GrpE.